The primary structure comprises 755 residues: Dynamin-1-like protein (755 aa).

The residue at position 1 (Met1) is an N-acetylmethionine. The Dynamin-type G domain occupies 22-315 (IIQLPQIVVV…LMHHIRDCLP (294 aa)). Positions 32 to 39 (GTQSSGKS) are G1 motif. Position 32–40 (32–40 (GTQSSGKSS)) interacts with GTP. The tract at residues 58–60 (VTR) is G2 motif. Positions 159-162 (DLPG) are G3 motif. The G4 motif stretch occupies residues 228-231 (TKLD). GTP contacts are provided by residues 228–234 (TKLDLMD) and 259–262 (NRSQ). Residues 258-261 (VNRS) are G5 motif. Residues 357 to 502 (YCNTIEGTAK…NEMVHNLVAI (146 aa)) form a middle domain region. The interaction with GSK3B stretch occupies residues 461 to 704 (NYSTQELLRF…NHVKDTLQSE (244 aa)). The interval 515–582 (ADACGLMNNN…IQDNRRETKN (68 aa)) is b domain. The interval 536–610 (ELPSAVSRDK…QEPTTGNWRG (75 aa)) is disordered. Ser542 carries the post-translational modification Phosphoserine. Residues Lys545 and Lys548 each participate in a glycyl lysine isopeptide (Lys-Gly) (interchain with G-Cter in SUMO) cross-link. Low complexity predominate over residues 550–567 (PSALAPASQEPSPAASAE). Ser561 carries the phosphoserine modification. Over residues 568–581 (ADGKLIQDNRRETK) the composition is skewed to basic and acidic residues. Residues Lys571 and Lys581 each participate in a glycyl lysine isopeptide (Lys-Gly) (interchain with G-Cter in SUMO) cross-link. Positions 586–600 (AGGGIGDGGRIGDGG) are enriched in gly residues. O-linked (GlcNAc) threonine glycosylation is found at Thr604 and Thr605. A Glycyl lysine isopeptide (Lys-Gly) (interchain with G-Cter in SUMO) cross-link involves residue Lys613. Lys616 is subject to N6-acetyllysine; alternate. Lys616 is covalently cross-linked (Glycyl lysine isopeptide (Lys-Gly) (interchain with G-Cter in SUMO); alternate). A Glycyl lysine isopeptide (Lys-Gly) (interchain with G-Cter in SUMO) cross-link involves residue Lys625. Ser626 bears the Phosphoserine mark. A Glycyl lysine isopeptide (Lys-Gly) (interchain with G-Cter in SUMO) cross-link involves residue Lys627. Ser635 carries the post-translational modification Phosphoserine; by CDK1. Residue Ser656 is modified to Phosphoserine; by CAMK1 and PKA. Cys663 is subject to S-nitrosocysteine. A GED domain is found at 663-754 (CEVIERLIKS…IIAEIRETHL (92 aa)). Positions 673–687 (YFLIVRKNIQDSVPK) are important for homodimerization.

Belongs to the TRAFAC class dynamin-like GTPase superfamily. Dynamin/Fzo/YdjA family. As to quaternary structure, homotetramer; dimerizes through the N-terminal GTP-middle region of one molecule binding to the GED domain of another DNM1L molecule. Oligomerizes in a GTP-dependent manner to form membrane-associated tubules with a spiral pattern. Interacts with GSK3B and MARCHF5. Interacts (via the GTPase and B domains) with UBE2I; the interaction promotes sumoylation of DNM1L, mainly in its B domain. Interacts with PPP3CA; the interaction dephosphorylates DNM1L and regulates its transition to mitochondria. Interacts with BCL2L1 isoform BCL-X(L) and CLTA; DNM1L and BCL2L1 isoform BCL-X(L) may form a complex in synaptic vesicles that also contains clathrin and MFF. Interacts with MFF; the interaction is inhinited by C11orf65/MFI. Interacts with FIS1. Interacts with MIEF2 and MIEF1; GTP-dependent this regulates GTP hydrolysis and DNM1L oligomerization. Interacts with PGAM5; this interaction leads to dephosphorylation at Ser-656 and activation of GTPase activity and eventually to mitochondria fragmentation. Interacts with RALBP1; during mitosis, recruits DNM1L to the mitochondrion and mediates its activation by the mitotic kinase cyclin B-CDK1. Interacts with FUNDC1; this interaction recruits DNM1L/DRP1 at ER-mitochondria contact sites. Post-translationally, phosphorylation/dephosphorylation events on two sites near the GED domain regulate mitochondrial fission. Phosphorylation on Ser-656 by CAMK1 and PKA inhibits the GTPase activity, leading to a defect in mitochondrial fission promoting mitochondrial elongation. Dephosphorylated on this site by PPP3CA which promotes mitochondrial fission. Phosphorylation on Ser-635 by PINK1 activates the GTPase activity and promotes mitochondrial fission. Phosphorylation on Ser-635 by CDK1 also promotes mitochondrial fission. Phosphorylated in a circadian manner at Ser-656. Dephosphorylated by PGAM5. Sumoylated on various lysine residues within the B domain, probably by MUL1. Sumoylation positively regulates mitochondrial fission. Desumoylated by SENP5 during G2/M transition of mitosis. Appears to be linked to its catalytic activity. In terms of processing, S-nitrosylation increases DNM1L dimerization, mitochondrial fission and causes neuronal damage. Post-translationally, O-GlcNAcylation augments the level of the GTP-bound active form of DNM1L and induces translocation from the cytoplasm to mitochondria in cardiomyocytes. It also decreases phosphorylation at Ser-656. Ubiquitination by MARCHF5 affects mitochondrial morphology. In terms of tissue distribution, expressed in all tissues tested (at protein level). Longer isoforms are preferentially expressed in brain.

Its subcellular location is the cytoplasm. It is found in the cytosol. It localises to the golgi apparatus. The protein localises to the endomembrane system. The protein resides in the mitochondrion outer membrane. Its subcellular location is the peroxisome. It is found in the membrane. It localises to the clathrin-coated pit. The protein localises to the cytoplasmic vesicle. The protein resides in the secretory vesicle. Its subcellular location is the synaptic vesicle membrane. It carries out the reaction GTP + H2O = GDP + phosphate + H(+). Its function is as follows. Functions in mitochondrial and peroxisomal division. Mediates membrane fission through oligomerization into membrane-associated tubular structures that wrap around the scission site to constrict and sever the mitochondrial membrane through a GTP hydrolysis-dependent mechanism. The specific recruitment at scission sites is mediated by membrane receptors like MFF, MIEF1 and MIEF2 for mitochondrial membranes. While the recruitment by the membrane receptors is GTP-dependent, the following hydrolysis of GTP induces the dissociation from the receptors and allows DNM1L filaments to curl into closed rings that are probably sufficient to sever a double membrane. Acts downstream of PINK1 to promote mitochondrial fission in a PRKN-dependent manner. Plays an important role in mitochondrial fission during mitosis. Through its function in mitochondrial division, ensures the survival of at least some types of postmitotic neurons, including Purkinje cells, by suppressing oxidative damage. Required for normal brain development, including that of cerebellum. Facilitates developmentally regulated apoptosis during neural tube formation. Required for a normal rate of cytochrome c release and caspase activation during apoptosis; this requirement may depend upon the cell type and the physiological apoptotic cues. Required for formation of endocytic vesicles. Proposed to regulate synaptic vesicle membrane dynamics through association with BCL2L1 isoform Bcl-X(L) which stimulates its GTPase activity in synaptic vesicles; the function may require its recruitment by MFF to clathrin-containing vesicles. Required for programmed necrosis execution. Rhythmic control of its activity following phosphorylation at Ser-656 is essential for the circadian control of mitochondrial ATP production. The chain is Dynamin-1-like protein from Rattus norvegicus (Rat).